The chain runs to 68 residues: Large ribosomal subunit protein uL30 (68 aa).

Belongs to the universal ribosomal protein uL30 family. As to quaternary structure, part of the 50S ribosomal subunit.

The protein is Large ribosomal subunit protein uL30 of Kocuria rhizophila (strain ATCC 9341 / DSM 348 / NBRC 103217 / DC2201).